The following is a 234-amino-acid chain: Superoxide dismutase [Mn], mitochondrial (234 aa).

Residues 1–34 constitute a mitochondrion transit peptide; that stretch reads MFSIRSSSRVLLKASSATTRATLNAAASKTFTRS. The Mn(2+) site is built by His60, His108, Asp198, and His202.

This sequence belongs to the iron/manganese superoxide dismutase family. In terms of assembly, homotetramer. It depends on Mn(2+) as a cofactor.

The protein localises to the mitochondrion matrix. It catalyses the reaction 2 superoxide + 2 H(+) = H2O2 + O2. Functionally, destroys superoxide anion radicals which are normally produced within the cells and which are toxic to biological systems. The sequence is that of Superoxide dismutase [Mn], mitochondrial (SOD2) from Candida albicans (Yeast).